We begin with the raw amino-acid sequence, 123 residues long: Potassium voltage-gated channel subfamily E member 2 (123 aa).

N-linked (GlcNAc...) asparagine glycans are attached at residues Asn-6 and Asn-29. The helical transmembrane segment at 49-69 (VILYLMVMIGMFAFIVVAILV) threads the bilayer. Topologically, residues 70–123 (STVKSKRREHSQDPYHQYIVEDWQQKYRSQILHLEDSKATIHENLGATGFTVSP) are cytoplasmic.

The protein belongs to the potassium channel KCNE family. In terms of assembly, interacts with KCNB1. Associates with KCNH2/ERG1. May associate with KCNQ2 and KCNQ3. Associates with HCN1 and probably HCN2. Heteromultimer with KCNC2. Interacts with KCNC2. Interacts with KCNQ1; forms a heterooligomer complex that targets to the membrane raft and leading to currents with an apparently instantaneous activation, a rapid deactivation process and a linear current-voltage relationship and decreases the amplitude of the outward current.

It localises to the cell membrane. The protein resides in the apical cell membrane. In terms of biological role, ancillary protein that functions as a regulatory subunit of the voltage-gated potassium (Kv) channel complex composed of pore-forming and potassium-conducting alpha subunits and of regulatory beta subunits. KCNE2 beta subunit modulates the gating kinetics and enhances stability of the channel complex. Alters the gating of the delayed rectifier Kv channel containing KCNB1 alpha subunit. Associates with KCNH2/HERG alpha subunit Kv channel to form the rapidly activating component of the delayed rectifying potassium current (IKr) in heart. May associate with KCNQ2 and/or KCNQ3 alpha subunits to modulate the native M-type current. May associate with HCN1 and HCN2 channel subunits to increase potassium current. Forms a heterooligomer complex with KCNQ1/KVLQT1 alpha subunits which leads to currents with an apparently instantaneous activation, a rapid deactivation process and a linear current-voltage relationship and decreases the amplitude of the outward current. KCNQ1-KCNE2 channel associates with Na(+)-coupled myo-inositol symporter in the apical membrane of choroid plexus epithelium and regulates the myo-inositol gradient between blood and cerebrospinal fluid with an impact on neuron excitability. The polypeptide is Potassium voltage-gated channel subfamily E member 2 (Kcne2) (Cavia porcellus (Guinea pig)).